We begin with the raw amino-acid sequence, 189 residues long: Protein shisa-like-2A (189 aa).

Helical transmembrane passes span 48 to 68 (SFFPYEHNYMWWLSIGALVGL) and 70 to 90 (TAAVVLLAFLITACVLCYLFI). The disordered stretch occupies residues 98–189 (LDPGLSLQTT…PTPGPHGPVP (92 aa)). The span at 140-171 (NTHLESNKKQTVSPTCLPQNQFMATVTASNIP) shows a compositional bias: polar residues.

This sequence belongs to the shisa family.

The protein resides in the membrane. This chain is Protein shisa-like-2A (Shisal2a), found in Mus musculus (Mouse).